A 94-amino-acid chain; its full sequence is U27-theraphotoxin-Cg1a (94 aa).

An N-terminal signal peptide occupies residues 1–22 (MIFLLPPVIFVMLLAESVLILG). The propeptide occupies 23-58 (DSEDADLMEMVQMSRPFFNPIIPAVEFVDLREERQR). Cystine bridges form between Cys-60–Cys-78, Cys-67–Cys-83, and Cys-77–Cys-88.

Belongs to the neurotoxin 14 (magi-1) family. OAIP-1 subfamily. In terms of tissue distribution, expressed by the venom gland.

It is found in the secreted. Its function is as follows. Probable ion channel inhibitor. The chain is U27-theraphotoxin-Cg1a from Chilobrachys guangxiensis (Chinese earth tiger tarantula).